Here is a 644-residue protein sequence, read N- to C-terminus: Large subunit GTPase 1 homolog (644 aa).

The tract at residues 1–31 is disordered; that stretch reads MGRRRAPGGGSLGRVLIRQQTQRSRSHRHTD. 2 positions are modified to phosphoserine: serine 93 and serine 97. The 267-residue stretch at 164-430 folds into the CP-type G domain; it reads WRQLWRVIER…LCDCPGLVMP (267 aa). Position 212-215 (212-215) interacts with GTP; sequence NKAD. Positions 253–345 are disordered; the sequence is KEEVDSVAGD…KNAENQQVNN (93 aa). The segment covering 302 to 326 has biased composition (acidic residues); that stretch reads CQEDEEEDWQTCSEEDSVPEEEEGC. Residues 379 to 386 and 423 to 426 contribute to the GTP site; these read GYPNVGKS and DCPG. Residues 618-644 form a disordered region; the sequence is VPGKPWKKHGNRNKKEKSRRLYKHLDV. A compositionally biased stretch (basic residues) spans 622–644; sequence PWKKHGNRNKKEKSRRLYKHLDV.

Belongs to the TRAFAC class YlqF/YawG GTPase family. LSG1 subfamily.

The protein resides in the cytoplasm. It is found in the endoplasmic reticulum. Its subcellular location is the nucleus. It localises to the cajal body. The enzyme catalyses GTP + H2O = GDP + phosphate + H(+). Functionally, functions as a GTPase. May act by mediating the release of NMD3 from the 60S ribosomal subunit after export into the cytoplasm during the 60S ribosomal subunit maturation. The sequence is that of Large subunit GTPase 1 homolog from Mus musculus (Mouse).